The sequence spans 339 residues: Replication factor C subunit 2 (339 aa).

48–55 (YGPPGTGK) lines the ATP pocket.

The protein belongs to the activator 1 small subunits family. In terms of assembly, heterotetramer of subunits RFC2, RFC3, RFC4 and RFC5 that can form a complex with RFC1. In terms of tissue distribution, expressed in roots, leaves, shoot apical meristem (SAM), flag leaves and panicles.

The protein localises to the nucleus. May be involved in DNA replication and thus regulate cell proliferation. The sequence is that of Replication factor C subunit 2 (RFC2) from Oryza sativa subsp. japonica (Rice).